The sequence spans 182 residues: MATIFDILNSINNKNNNHSNYYSCKRLKSNNNNNNNNFRNNSIKRIDIIPSMDVTITDNNIIIETELAGISKDNIEIDIKDSILTIQGEKKINNNYKQQQQQHSDKTKTNNELPLIEENKKEFRKYLSERSFGNFKRCLDLTSILYQLDLSTIKSNFENGLLIITINKKSDLSNSSFKININ.

Positions 43 to 182 constitute a sHSP domain; sequence IKRIDIIPSM…SNSSFKININ (140 aa).

Belongs to the small heat shock protein (HSP20) family.

This is Small heat shock protein hspG1 (hspG1) from Dictyostelium discoideum (Social amoeba).